The sequence spans 365 residues: Histidine biosynthesis bifunctional protein HisB (365 aa).

A histidinol-phosphatase region spans residues 1 to 176 (MTQQPTLFID…VADPKGLGQP (176 aa)). Asp-10 serves as the catalytic Nucleophile. Asp-10 and Asp-12 together coordinate Mg(2+). Asp-12 (proton donor) is an active-site residue. Cys-93, His-95, Cys-101, and Cys-103 together coordinate Zn(2+). Asp-130 lines the Mg(2+) pocket. An imidazoleglycerol-phosphate dehydratase region spans residues 177 to 365 (RHAVVARKTK…NEMPSSKGVL (189 aa)).

The protein in the N-terminal section; belongs to the histidinol-phosphatase family. This sequence in the C-terminal section; belongs to the imidazoleglycerol-phosphate dehydratase family. Requires Mg(2+) as cofactor. Zn(2+) serves as cofactor.

Its subcellular location is the cytoplasm. It carries out the reaction D-erythro-1-(imidazol-4-yl)glycerol 3-phosphate = 3-(imidazol-4-yl)-2-oxopropyl phosphate + H2O. The catalysed reaction is L-histidinol phosphate + H2O = L-histidinol + phosphate. The protein operates within amino-acid biosynthesis; L-histidine biosynthesis; L-histidine from 5-phospho-alpha-D-ribose 1-diphosphate: step 6/9. Its pathway is amino-acid biosynthesis; L-histidine biosynthesis; L-histidine from 5-phospho-alpha-D-ribose 1-diphosphate: step 8/9. This chain is Histidine biosynthesis bifunctional protein HisB, found in Mannheimia succiniciproducens (strain KCTC 0769BP / MBEL55E).